Reading from the N-terminus, the 419-residue chain is Transcription termination factor Rho (419 aa).

One can recognise a Rho RNA-BD domain in the interval 48–123; sequence EISGDGVLEI…LKVDTINFDR (76 aa). RNA-binding stretches follow at residues 61-66, 78-80, and 108-110; these read GFGFLR, DIY, and ERY. Residues 169 to 174, 181 to 186, and Arg212 contribute to the ATP site; these read GKGQRG and KAGKTI. The segment at 284 to 288 is RNA-binding 2; that stretch reads VLTGG.

It belongs to the Rho family. In terms of assembly, homohexamer. The homohexamer assembles into an open ring structure.

Facilitates transcription termination by a mechanism that involves Rho binding to the nascent RNA, activation of Rho's RNA-dependent ATPase activity, and release of the mRNA from the DNA template. This Pseudomonas fluorescens biotype C protein is Transcription termination factor Rho.